The chain runs to 132 residues: MKFACRAITRGRAEGEALVTKEYISFLGGIDKETGIVKEDCEIKGESVAGRILVFPGGKGSTVGSYVLLNLRKNGVAPKAIINKKTETIIAVGAAMAEIPLVEVRDEKFFEAVKTGDRVVVNADEGYVELIE.

Residue Ser61 is the Proton acceptor of the active site.

Belongs to the AcnX type II small subunit family. Heterodimer composed of a large subunit (PMDh-L) and a small subunit (PMDh-S).

The enzyme catalyses (R)-5-phosphomevalonate = (2E)-3-methyl-5-phosphooxypent-2-enoate + H2O. It functions in the pathway isoprenoid biosynthesis; isopentenyl diphosphate biosynthesis via mevalonate pathway. In terms of biological role, component of a hydro-lyase that catalyzes the dehydration of mevalonate 5-phosphate (MVA5P) to form trans-anhydromevalonate 5-phosphate (tAHMP). Involved in the archaeal mevalonate (MVA) pathway, which provides fundamental precursors for isoprenoid biosynthesis, such as isopentenyl diphosphate (IPP) and dimethylallyl diphosphate (DMAPP). This Archaeoglobus fulgidus (strain ATCC 49558 / DSM 4304 / JCM 9628 / NBRC 100126 / VC-16) protein is Phosphomevalonate dehydratase small subunit.